The chain runs to 157 residues: Recombination endonuclease VII (157 aa).

Positions 23 and 26 each coordinate Zn(2+). Residue Asp-40 coordinates Ca(2+). 2 residues coordinate Zn(2+): Cys-58 and Cys-61. A Ca(2+)-binding site is contributed by Asn-62.

Homodimer. Ca(2+) serves as cofactor. Requires Zn(2+) as cofactor.

Cleaves DNA cruciform and Y-structures as well as heteroduplex loops. Resolves Holliday junctions, recognizes a broad spectrum of DNA substrates ranging from branched DNAs to single base mismatches. In Enterobacteria phage T4 (Bacteriophage T4), this protein is Recombination endonuclease VII (49).